The chain runs to 502 residues: Glycerol kinase (502 aa).

Residue T13 coordinates ADP. Residues T13, T14, and S15 each coordinate ATP. T13 is a binding site for sn-glycerol 3-phosphate. R17 contacts ADP. The sn-glycerol 3-phosphate site is built by R83, E84, Y136, and D246. The glycerol site is built by R83, E84, Y136, D246, and Q247. Residues T268 and G311 each contribute to the ADP site. 4 residues coordinate ATP: T268, G311, Q315, and G412. 2 residues coordinate ADP: G412 and N416.

Belongs to the FGGY kinase family.

It carries out the reaction glycerol + ATP = sn-glycerol 3-phosphate + ADP + H(+). Its pathway is polyol metabolism; glycerol degradation via glycerol kinase pathway; sn-glycerol 3-phosphate from glycerol: step 1/1. With respect to regulation, inhibited by fructose 1,6-bisphosphate (FBP). Its function is as follows. Key enzyme in the regulation of glycerol uptake and metabolism. Catalyzes the phosphorylation of glycerol to yield sn-glycerol 3-phosphate. In Francisella tularensis subsp. tularensis (strain WY96-3418), this protein is Glycerol kinase.